The chain runs to 486 residues: UDP-N-acetylmuramoyl-L-alanyl-D-glutamate--2,6-diaminopimelate ligase (486 aa).

Serine 30 contacts UDP-N-acetyl-alpha-D-muramoyl-L-alanyl-D-glutamate. 111–117 (GTNGKTT) is an ATP binding site. UDP-N-acetyl-alpha-D-muramoyl-L-alanyl-D-glutamate-binding positions include 153-154 (TT), serine 180, glutamine 186, and arginine 188. Position 220 is an N6-carboxylysine (lysine 220). Meso-2,6-diaminopimelate-binding positions include arginine 378, 402 to 405 (DNPR), glycine 455, and glutamate 459. Positions 402 to 405 (DNPR) match the Meso-diaminopimelate recognition motif motif.

It belongs to the MurCDEF family. MurE subfamily. Mg(2+) is required as a cofactor. Post-translationally, carboxylation is probably crucial for Mg(2+) binding and, consequently, for the gamma-phosphate positioning of ATP.

The protein localises to the cytoplasm. The enzyme catalyses UDP-N-acetyl-alpha-D-muramoyl-L-alanyl-D-glutamate + meso-2,6-diaminopimelate + ATP = UDP-N-acetyl-alpha-D-muramoyl-L-alanyl-gamma-D-glutamyl-meso-2,6-diaminopimelate + ADP + phosphate + H(+). Its pathway is cell wall biogenesis; peptidoglycan biosynthesis. Functionally, catalyzes the addition of meso-diaminopimelic acid to the nucleotide precursor UDP-N-acetylmuramoyl-L-alanyl-D-glutamate (UMAG) in the biosynthesis of bacterial cell-wall peptidoglycan. In Parabacteroides distasonis (strain ATCC 8503 / DSM 20701 / CIP 104284 / JCM 5825 / NCTC 11152), this protein is UDP-N-acetylmuramoyl-L-alanyl-D-glutamate--2,6-diaminopimelate ligase.